Here is a 290-residue protein sequence, read N- to C-terminus: Porphobilinogen deaminase (290 aa).

S-(dipyrrolylmethanemethyl)cysteine is present on cysteine 237.

It belongs to the HMBS family. Monomer. The cofactor is dipyrromethane.

The enzyme catalyses 4 porphobilinogen + H2O = hydroxymethylbilane + 4 NH4(+). The protein operates within porphyrin-containing compound metabolism; protoporphyrin-IX biosynthesis; coproporphyrinogen-III from 5-aminolevulinate: step 2/4. Tetrapolymerization of the monopyrrole PBG into the hydroxymethylbilane pre-uroporphyrinogen in several discrete steps. The chain is Porphobilinogen deaminase from Clostridium botulinum (strain Langeland / NCTC 10281 / Type F).